The sequence spans 387 residues: Protein NDRG3 (387 aa).

Residues 329–387 (PSASMTRLVRSRTHSASSSGSMEMPRSRSHTSNAQLQSTSNNSLSNQIQETPHTIELSC) form a disordered region. Residues 359–377 (TSNAQLQSTSNNSLSNQIQ) are compositionally biased toward low complexity.

It belongs to the NDRG family.

The sequence is that of Protein NDRG3 from Xenopus tropicalis (Western clawed frog).